Reading from the N-terminus, the 357-residue chain is RNA-binding protein 43 (357 aa).

Positions 15-104 (RTVVVAGLPV…VSLRVSHFGD (90 aa)) constitute an RRM domain.

The protein is RNA-binding protein 43 (RBM43) of Homo sapiens (Human).